Consider the following 783-residue polypeptide: Glucosidase YgjK (783 aa).

An N-terminal signal peptide occupies residues 1 to 22; it reads MKIKTILTPVTCALLISFSAHA. The tract at residues 24–254 is N-terminal domain; that stretch reads NADNYKNVIN…TTLYTTYSHL (231 aa). Positions 254 to 299 are linker; the sequence is LLTAQEVSKEQMQIRDILARPAFYLTASQQRWEEYLKKGLTNPDAT. The interval 300 to 783 is a domain; it reads PEQTRVAVKA…MLYNDFFRKQ (484 aa). Ca(2+) is bound by residues Asp-454, Asn-456, Asn-458, Val-460, and Glu-462. The Proton donor role is filled by Asp-524. Glu-572 contacts Ca(2+). The active-site Proton acceptor is the Glu-750.

The protein belongs to the glycosyl hydrolase 63 family.

In terms of biological role, glucoside hydrolase that cleaves the alpha-1,3-glucosidic linkage in nigerose. Has very low activity towards maltooligosaccharides, soluble starch, nigerotriose, kojibiose and trehalose. The protein is Glucosidase YgjK (ygjK) of Escherichia coli (strain K12).